We begin with the raw amino-acid sequence, 189 residues long: Cold-regulated 413 plasma membrane protein 3 (189 aa).

At 1 to 24 (MENIEYLNEIQAVAGKLIHSYGVP) the chain is on the extracellular side. Residues 25–45 (VMITLFLRWLASIVAVFLMIL) traverse the membrane as a helical segment. The Cytoplasmic segment spans residues 46–55 (DQTKWKYSNN). The helical transmembrane segment at 56–76 (IMASLLAPYLFSSLPIVIFQV) threads the bilayer. Residues 77–79 (LRN) lie on the Extracellular side of the membrane. The helical transmembrane segment at 80 to 100 (GVGKWIALLTVILRLFLPNHF) threads the bilayer. The Cytoplasmic segment spans residues 101–104 (HESL). A helical transmembrane segment spans residues 105–125 (EIPGATILLIVVTPSDIGAIF). Topologically, residues 126 to 168 (RDDLRYTGGDVCLLTSFYLINKHTKACGGIKNSFTQKDKVTYS) are extracellular. The chain crosses the membrane as a helical span at residues 169-189 (ICLWILFVYPILSSFAALFYL).

This sequence belongs to the Cold-regulated 413 protein family.

The protein localises to the cell membrane. In Arabidopsis thaliana (Mouse-ear cress), this protein is Cold-regulated 413 plasma membrane protein 3.